The primary structure comprises 3291 residues: Protocadherin-16 (3291 aa).

The signal sequence occupies residues 1 to 35; sequence MQEELSVALSCPGMKSLGTLLPLLVLLGTTVPGIR. Residues 36-2933 are Extracellular-facing; it reads GQAGSLDLQI…PDLNLLLVGA (2898 aa). Cadherin domains lie at 37-137, 138-249, 250-356, 369-466, 476-572, 573-679, 680-784, 785-888, 889-994, 995-1105, 1100-1205, 1218-1317, 1326-1429, 1430-1539, 1539-1642, 1643-1744, 1745-1848, 1849-1953, 1976-2061, 2062-2164, 2165-2270, 2270-2369, 2370-2475, 2476-2595, 2596-2699, 2700-2806, and 2807-2926; these read QAGS…APAF, PQAR…APAF, NQSR…QPSM, VSEA…APAF, LPEV…EPQF, QRTF…PPQF, YPRE…PPIF, EQLQ…SPAF, PAPE…APRF, DSPT…EPTF, SEEP…SPTF, IQVP…SPDL, VPVV…APAF, ARDP…APVF, FASP…APAF, PQQE…SPTF, GNTH…APAF, PVPS…APAF, LATL…GPRF, PRAN…APRF, LQPH…RPTI, IPQP…VPIF, SQSL…APSF, TLPH…PPVF, TRAS…GPAF, PLSL…DPVF, and LAPS…APDL. An N-linked (GlcNAc...) asparagine glycan is attached at N396. The interval 951–971 is disordered; sequence GPPGGPPHELEVEAQDGGSPP. N-linked (GlcNAc...) asparagine glycosylation occurs at N1711. N-linked (GlcNAc...) asparagine glycosylation occurs at N2354. N2562 carries an N-linked (GlcNAc...) asparagine glycan. A helical transmembrane segment spans residues 2934–2954; that stretch reads VAASLGVVVVLALAALVLGLV. Over 2955–3291 the chain is Cytoplasmic; the sequence is RARSRKAEAA…EPPDDTELRI (337 aa). The tract at residues 2978-3033 is disordered; that stretch reads SLQKLGREPPSPPPSEHLYHQTLPSYGGPGAGGPYPRGGSLDPSHSSGRGSAEAAE. Positions 3004–3013 are enriched in gly residues; that stretch reads GGPGAGGPYP. A Phosphoserine modification is found at S3048. 2 disordered regions span residues 3051–3080 and 3226–3291; these read SSLAARGPDSGIQQDADGLSDTSCEPPAPD and ASHR…ELRI. Residues 3237–3259 are compositionally biased toward low complexity; the sequence is SLSSAAMSPSFSPSLSPLAARSP. Positions 3270–3279 are enriched in polar residues; it reads PSASALSTES.

Heterophilic interaction with FAT4; this interaction affects their respective protein levels.

Its subcellular location is the cell membrane. Its function is as follows. Calcium-dependent cell-adhesion protein. Mediates functions in neuroprogenitor cell proliferation and differentiation. In Rattus norvegicus (Rat), this protein is Protocadherin-16 (Dchs1).